Reading from the N-terminus, the 71-residue chain is Antitoxin VapB22 (71 aa).

This sequence belongs to the phD/YefM antitoxin family.

In terms of biological role, antitoxin component of a type II toxin-antitoxin (TA) system. Upon expression in M.smegmatis neutralizes the effect of cognate toxin VapC22. This is Antitoxin VapB22 (vapB22) from Mycobacterium tuberculosis (strain ATCC 25618 / H37Rv).